The sequence spans 713 residues: Zinc finger and BTB domain-containing protein 1 (713 aa).

Residue Lys3 forms a Glycyl lysine isopeptide (Lys-Gly) (interchain with G-Cter in SUMO2) linkage. In terms of domain architecture, BTB spans 24-91 (CDCCIAIDDI…MYLGKIMTAP (68 aa)). Glycyl lysine isopeptide (Lys-Gly) (interchain with G-Cter in SUMO2) cross-links involve residues Lys200 and Lys205. The segment at 216 to 242 (FTCDSCGFGFSCEKLLDEHVLTCTNRH) adopts a C2H2-type 1; atypical zinc-finger fold. Glycyl lysine isopeptide (Lys-Gly) (interchain with G-Cter in SUMO2) cross-links involve residues Lys261, Lys266, Lys276, Lys284, Lys304, Lys316, Lys328, Lys340, and Lys346. The disordered stretch occupies residues 270–319 (AEKDSSKTFSAQPDKYREDANQAPDDSASTTGSRKSTVEAGIAGEEKSRA). Phosphoserine is present on Ser355. Residue Thr356 is modified to Phosphothreonine. Lys381 participates in a covalent cross-link: Glycyl lysine isopeptide (Lys-Gly) (interchain with G-Cter in SUMO2). Residues 448 to 470 (CACGKCGQILVKGRQLQEHAQRC) form a C2H2-type 2; atypical zinc finger. Lys528 is covalently cross-linked (Glycyl lysine isopeptide (Lys-Gly) (interchain with G-Cter in SUMO2)). The UBZ-type zinc-finger motif lies at 533–558 (PFRCPNCGQRFETENLVVEHMSSCLD). Residue Lys563 forms a Glycyl lysine isopeptide (Lys-Gly) (interchain with G-Cter in SUMO2) linkage. C2H2-type zinc fingers lie at residues 578–600 (HFCN…YTVH), 606–628 (FVCQ…NDMH), 634–656 (YVCS…MISH), 662–684 (TICQ…MDVH), and 686–709 (YTCG…NAKH).

As to quaternary structure, homodimer. Homodimer. Interacts (via BTB domain) with TRIM28 (unphosphorylated or phosphorylated form). Sumoylated with SUMO2 at Lys-328 and to a lesser extent at Lys-266. Sumoylation inhibits its transcriptional repression activity and regulates its subcellular localization. In terms of tissue distribution, expressed strongly in thymus and spleen, less in lymph nodes and peripheral blood mononuclear cells (PBMCs) and weakly in bone marrow. Strongly expressed in immature, but weakly in mature bone marrow-lymphocyte B.

The protein localises to the nucleus. The protein resides in the nucleoplasm. In terms of biological role, acts as a transcriptional repressor. Represses cAMP-responsive element (CRE)-mediated transcriptional activation. In addition, has a role in translesion DNA synthesis. Requires for UV-inducible RAD18 loading, PCNA monoubiquitination, POLH recruitment to replication factories and efficient translesion DNA synthesis. Plays a key role in the transcriptional regulation of T lymphocyte development. In Mus musculus (Mouse), this protein is Zinc finger and BTB domain-containing protein 1 (Zbtb1).